Reading from the N-terminus, the 179-residue chain is Large ribosomal subunit protein uL5 (179 aa).

This sequence belongs to the universal ribosomal protein uL5 family. Part of the 50S ribosomal subunit; part of the 5S rRNA/L5/L18/L25 subcomplex. Contacts the 5S rRNA and the P site tRNA. Forms a bridge to the 30S subunit in the 70S ribosome.

In terms of biological role, this is one of the proteins that bind and probably mediate the attachment of the 5S RNA into the large ribosomal subunit, where it forms part of the central protuberance. In the 70S ribosome it contacts protein S13 of the 30S subunit (bridge B1b), connecting the 2 subunits; this bridge is implicated in subunit movement. Contacts the P site tRNA; the 5S rRNA and some of its associated proteins might help stabilize positioning of ribosome-bound tRNAs. The protein is Large ribosomal subunit protein uL5 of Alkalilimnicola ehrlichii (strain ATCC BAA-1101 / DSM 17681 / MLHE-1).